Reading from the N-terminus, the 421-residue chain is Probable sugar-binding periplasmic protein (421 aa).

The first 27 residues, 1 to 27 (MHKLLKLAAMGTAACALLAGMAPVANA), serve as a signal peptide directing secretion.

It belongs to the bacterial solute-binding protein 1 family.

It localises to the periplasm. Part of a binding-protein-dependent transport system for a sugar. This is Probable sugar-binding periplasmic protein from Brucella melitensis biotype 1 (strain ATCC 23456 / CCUG 17765 / NCTC 10094 / 16M).